We begin with the raw amino-acid sequence, 290 residues long: MSQKQLWYEKLHSSFGQYFSIKEVLYRDKTDHQDLIIFDTEEFGRVMALNHVVQTTERDEFIYHEMMTHVPLLAHGDAKKVLIIGGGDGGILREVCRHAGVKEIIMVEIDQDVVNLCQEYFPHHHAGAYDDPRFQLKIDDGAHFVEQTNHRFDLIISDSTDPIGPGEHLFKSSFYQACRRILNAGGLFVAQNGVCFLQQTEVINTYQRLMPYFSDVSFYQAAIPTYYGGIMTFAWASENANLRRIGLNDLESRFADSGLKSCRYYNPFVHFASFALPQYLIEALAKKAPK.

Residues 5 to 238 (QLWYEKLHSS…GIMTFAWASE (234 aa)) form the PABS domain. Glutamine 33 contributes to the S-methyl-5'-thioadenosine binding site. Spermidine contacts are provided by histidine 64 and aspartate 88. S-methyl-5'-thioadenosine-binding positions include glutamate 108 and 140–141 (DG). Residue aspartate 158 is the Proton acceptor of the active site. 158–161 (DSTD) contacts spermidine. Proline 165 serves as a coordination point for S-methyl-5'-thioadenosine.

The protein belongs to the spermidine/spermine synthase family. As to quaternary structure, homodimer or homotetramer.

It localises to the cytoplasm. It catalyses the reaction S-adenosyl 3-(methylsulfanyl)propylamine + putrescine = S-methyl-5'-thioadenosine + spermidine + H(+). The protein operates within amine and polyamine biosynthesis; spermidine biosynthesis; spermidine from putrescine: step 1/1. Its function is as follows. Catalyzes the irreversible transfer of a propylamine group from the amino donor S-adenosylmethioninamine (decarboxy-AdoMet) to putrescine (1,4-diaminobutane) to yield spermidine. This Hamiltonella defensa subsp. Acyrthosiphon pisum (strain 5AT) protein is Polyamine aminopropyltransferase.